The following is a 199-amino-acid chain: Recombination protein RecR (199 aa).

The C4-type zinc-finger motif lies at 58–73 (CLNCGNIGTSDICDIC). The Toprim domain maps to 81-176 (GEICVVEDVA…AVTSLAQGVP (96 aa)).

It belongs to the RecR family.

May play a role in DNA repair. It seems to be involved in an RecBC-independent recombinational process of DNA repair. It may act with RecF and RecO. The polypeptide is Recombination protein RecR (Dinoroseobacter shibae (strain DSM 16493 / NCIMB 14021 / DFL 12)).